Reading from the N-terminus, the 180-residue chain is Large ribosomal subunit protein uL5 (180 aa).

Belongs to the universal ribosomal protein uL5 family. In terms of assembly, part of the 50S ribosomal subunit; part of the 5S rRNA/L5/L18/L25 subcomplex. Contacts the 5S rRNA and the P site tRNA. Forms a bridge to the 30S subunit in the 70S ribosome.

This is one of the proteins that bind and probably mediate the attachment of the 5S RNA into the large ribosomal subunit, where it forms part of the central protuberance. In the 70S ribosome it contacts protein S13 of the 30S subunit (bridge B1b), connecting the 2 subunits; this bridge is implicated in subunit movement. Contacts the P site tRNA; the 5S rRNA and some of its associated proteins might help stabilize positioning of ribosome-bound tRNAs. The polypeptide is Large ribosomal subunit protein uL5 (Streptococcus agalactiae serotype Ia (strain ATCC 27591 / A909 / CDC SS700)).